A 606-amino-acid polypeptide reads, in one-letter code: MAVTFEDVTIIFTWEEWKFLDSSQKRLYREVMWENYTNVMSVENWNESYKSQEEKFRYLEYENFSYWQGWWNAGAQMYENQNYGETVQGTDSKDLTQQDRSQCQEWLILSTQVPGYGNYELTFESKSLRNLKYKNFMPWQSLETKTTQDYGREIYMSGSHGFQGGRYRLGISRKNLSMEKEQKLIVQHSYIPVEEALPQYVGVICQEDLLRDSMEEKYCGCNKCKGIYYWNSRCVFHKRNQPGENLCQCSICKACFSQRSDLYRHPRNHIGKKLYGCDEVDGNFHQSSGVHFHQRVHIGEVPYSCNACGKSFSQISSLHNHQRVHTEEKFYKIECDKDLSRNSLLHIHQRLHIGEKPFKCNQCGKSFNRSSVLHVHQRVHTGEKPYKCDECGKGFSQSSNLRIHQLVHTGEKSYKCEDCGKGFTQRSNLQIHQRVHTGEKPYKCDDCGKDFSHSSDLRIHQRVHTGEKPYTCPECGKGFSKSSKLHTHQRVHTGEKPYKCEECGKGFSQRSHLLIHQRVHTGEKPYKCHDCGKGFSHSSNLHIHQRVHTGEKPYQCAKCGKGFSHSSALRIHQRVHAGEKPYKCREYYKGFDHNSHLHNNHRRGNL.

One can recognise a KRAB domain in the interval V3–Y83. The C2H2-type 1; degenerate zinc finger occupies Y275–H297. A C2H2-type 2 zinc finger spans residues Y303–H325. Residues F330–H352 form a C2H2-type 3; degenerate zinc finger. C2H2-type zinc fingers lie at residues F358–H380, Y386–H408, Y414–H436, Y442–H464, Y470–H492, Y498–H520, Y526–H548, and Y554–H576.

Belongs to the krueppel C2H2-type zinc-finger protein family.

It is found in the nucleus. Functionally, may be involved in transcriptional regulation. The protein is Zinc finger protein 214 (ZNF214) of Homo sapiens (Human).